The chain runs to 85 residues: Small ribosomal subunit protein bS20 (85 aa).

Belongs to the bacterial ribosomal protein bS20 family.

Functionally, binds directly to 16S ribosomal RNA. The protein is Small ribosomal subunit protein bS20 of Borrelia turicatae (strain 91E135).